A 413-amino-acid polypeptide reads, in one-letter code: Multidrug resistance protein MdtA (413 aa).

A signal peptide spans 1–20; the sequence is MKGSNTFRWAIAIGVVVAAA. Disordered regions lie at residues 31–57 and 391–413; these read SPTAAPGVAAQAPHTAAAGRRGMRDGP and EPQTTMADEKSPSRHEGQKGARA. Residues 397–413 are compositionally biased toward basic and acidic residues; the sequence is ADEKSPSRHEGQKGARA.

It belongs to the membrane fusion protein (MFP) (TC 8.A.1) family. In terms of assembly, part of a tripartite efflux system composed of MdtA, MdtB and MdtC.

It localises to the cell inner membrane. The polypeptide is Multidrug resistance protein MdtA (Salmonella paratyphi C (strain RKS4594)).